The primary structure comprises 279 residues: UTP--glucose-1-phosphate uridylyltransferase (279 aa).

It belongs to the UDPGP type 2 family.

It carries out the reaction alpha-D-glucose 1-phosphate + UTP + H(+) = UDP-alpha-D-glucose + diphosphate. Its function is as follows. May play a role in stationary phase survival. The protein is UTP--glucose-1-phosphate uridylyltransferase (galU) of Pseudomonas aeruginosa (strain ATCC 15692 / DSM 22644 / CIP 104116 / JCM 14847 / LMG 12228 / 1C / PRS 101 / PAO1).